The following is a 998-amino-acid chain: tRNA (34-2'-O)-methyltransferase regulator WDR6 (998 aa).

WD repeat units lie at residues 148-185 (LYYT…ESDP), 200-239 (AHNG…DWTT), 250-291 (GHSS…ILKR), 294-333 (QFGA…NRPK), 476-515 (NNRE…DDFQ), 527-566 (MGSN…STLR), 567-608 (VSQR…LLQL), 664-704 (RNCN…LSQR), 779-821 (ARLM…QLDL), 826-865 (DIQR…TYFQ), and 868-911 (LHVT…VEQK).

This sequence belongs to the WD repeat WDR6 family. In terms of assembly, interacts with Trm7-34.

It is found in the cytoplasm. Functionally, together with methyltransferase Trm7-34, methylates the 2'-O-ribose of nucleotides at position 34 of the anticodon loop of substrate tRNAs. The protein is tRNA (34-2'-O)-methyltransferase regulator WDR6 of Drosophila melanogaster (Fruit fly).